Consider the following 383-residue polypeptide: Succinyl-diaminopimelate desuccinylase (383 aa).

His-73 provides a ligand contact to Zn(2+). Asp-75 is an active-site residue. Asp-107 serves as a coordination point for Zn(2+). Catalysis depends on Glu-141, which acts as the Proton acceptor. Zn(2+) contacts are provided by Glu-142, Glu-170, and His-356.

The protein belongs to the peptidase M20A family. DapE subfamily. Homodimer. Zn(2+) is required as a cofactor. Co(2+) serves as cofactor.

It catalyses the reaction N-succinyl-(2S,6S)-2,6-diaminopimelate + H2O = (2S,6S)-2,6-diaminopimelate + succinate. The protein operates within amino-acid biosynthesis; L-lysine biosynthesis via DAP pathway; LL-2,6-diaminopimelate from (S)-tetrahydrodipicolinate (succinylase route): step 3/3. In terms of biological role, catalyzes the hydrolysis of N-succinyl-L,L-diaminopimelic acid (SDAP), forming succinate and LL-2,6-diaminopimelate (DAP), an intermediate involved in the bacterial biosynthesis of lysine and meso-diaminopimelic acid, an essential component of bacterial cell walls. In Pseudomonas entomophila (strain L48), this protein is Succinyl-diaminopimelate desuccinylase.